The chain runs to 497 residues: NAD(P)H-quinone oxidoreductase chain 4, chloroplastic (497 aa).

Transmembrane regions (helical) follow at residues 5–25, 36–56, 88–108, 112–132, 135–155, 168–188, 212–232, 243–263, 275–295, 306–326, 331–351, 387–407, 418–438, and 463–483; these read VPWL…IPIL, YTLG…YCHF, LGLV…AWPI, TRLF…LFVS, ILLF…LLCL, FVLY…TMSF, VLIY…FPFH, HYST…YGLI, FLLG…ASLI, IAYS…SFTE, GAIL…FLAG, LALP…GVVT, GITV…LSML, and LFIL…PNLI.

It belongs to the complex I subunit 4 family.

The protein localises to the plastid. It is found in the chloroplast thylakoid membrane. The enzyme catalyses a plastoquinone + NADH + (n+1) H(+)(in) = a plastoquinol + NAD(+) + n H(+)(out). The catalysed reaction is a plastoquinone + NADPH + (n+1) H(+)(in) = a plastoquinol + NADP(+) + n H(+)(out). This Adiantum capillus-veneris (Maidenhair fern) protein is NAD(P)H-quinone oxidoreductase chain 4, chloroplastic.